The chain runs to 275 residues: Formamidopyrimidine-DNA glycosylase (275 aa).

The active-site Schiff-base intermediate with DNA is Pro2. Residue Glu3 is the Proton donor of the active site. Lys58 serves as the catalytic Proton donor; for beta-elimination activity. Residues His93, Arg111, and Arg156 each coordinate DNA. The segment at 241–275 adopts an FPG-type zinc-finger fold; the sequence is FVYDRAGQPCRVCNTPIRQIVQGQRSTYFCPTCQR. Arg265 (proton donor; for delta-elimination activity) is an active-site residue.

The protein belongs to the FPG family. As to quaternary structure, monomer. It depends on Zn(2+) as a cofactor.

It catalyses the reaction Hydrolysis of DNA containing ring-opened 7-methylguanine residues, releasing 2,6-diamino-4-hydroxy-5-(N-methyl)formamidopyrimidine.. The enzyme catalyses 2'-deoxyribonucleotide-(2'-deoxyribose 5'-phosphate)-2'-deoxyribonucleotide-DNA = a 3'-end 2'-deoxyribonucleotide-(2,3-dehydro-2,3-deoxyribose 5'-phosphate)-DNA + a 5'-end 5'-phospho-2'-deoxyribonucleoside-DNA + H(+). Involved in base excision repair of DNA damaged by oxidation or by mutagenic agents. Acts as a DNA glycosylase that recognizes and removes damaged bases. Has a preference for oxidized purines, such as 7,8-dihydro-8-oxoguanine (8-oxoG). Has AP (apurinic/apyrimidinic) lyase activity and introduces nicks in the DNA strand. Cleaves the DNA backbone by beta-delta elimination to generate a single-strand break at the site of the removed base with both 3'- and 5'-phosphates. This chain is Formamidopyrimidine-DNA glycosylase, found in Burkholderia lata (strain ATCC 17760 / DSM 23089 / LMG 22485 / NCIMB 9086 / R18194 / 383).